Consider the following 133-residue polypeptide: Sec-independent protein translocase protein TatB (133 aa).

A helical transmembrane segment spans residues 1 to 21 (MFDIGFWELVLIAIVALVVLG). Positions 67 to 133 (EQMGMQNLSP…ASQPAEKKAE (67 aa)) are disordered. Positions 70 to 84 (GMQNLSPELQKSVES) are enriched in polar residues. Residues 97–116 (AATPSSEASSTSSNPSSATE) are compositionally biased toward low complexity.

The protein belongs to the TatB family. In terms of assembly, the Tat system comprises two distinct complexes: a TatABC complex, containing multiple copies of TatA, TatB and TatC subunits, and a separate TatA complex, containing only TatA subunits. Substrates initially bind to the TatABC complex, which probably triggers association of the separate TatA complex to form the active translocon.

It localises to the cell inner membrane. In terms of biological role, part of the twin-arginine translocation (Tat) system that transports large folded proteins containing a characteristic twin-arginine motif in their signal peptide across membranes. Together with TatC, TatB is part of a receptor directly interacting with Tat signal peptides. TatB may form an oligomeric binding site that transiently accommodates folded Tat precursor proteins before their translocation. The sequence is that of Sec-independent protein translocase protein TatB from Vibrio cholerae serotype O1 (strain ATCC 39315 / El Tor Inaba N16961).